The sequence spans 118 residues: Ribosome-binding factor A (118 aa).

This sequence belongs to the RbfA family. Monomer. Binds 30S ribosomal subunits, but not 50S ribosomal subunits or 70S ribosomes.

It localises to the cytoplasm. In terms of biological role, one of several proteins that assist in the late maturation steps of the functional core of the 30S ribosomal subunit. Associates with free 30S ribosomal subunits (but not with 30S subunits that are part of 70S ribosomes or polysomes). Required for efficient processing of 16S rRNA. May interact with the 5'-terminal helix region of 16S rRNA. The polypeptide is Ribosome-binding factor A (Bacillus cereus (strain AH187)).